A 160-amino-acid polypeptide reads, in one-letter code: Cytosolic iron-sulfur assembly component 2A (160 aa).

Residues His-89, His-123, Glu-150, and Glu-153 each contribute to the Zn(2+) site.

It belongs to the MIP18 family. Monomer and homodimer. Component of the CIA complex. Interacts with CIAO1. Interacts with IREB2. Interacts with APAF1. As to expression, substantially enriched in macrophages.

Its subcellular location is the cytoplasm. Component of the cytosolic iron-sulfur protein assembly (CIA) complex, a multiprotein complex that mediates the incorporation of iron-sulfur cluster into extramitochondrial Fe/S proteins. As a CIA complex component and in collaboration with CIAO1 specifically matures ACO1 and stabilizes IREB2, connecting cytosolic iron-sulfur protein maturation with cellular iron regulation. May play a role in chromosome segregation through establishment of sister chromatid cohesion. May induce apoptosis in collaboration with APAF1. This chain is Cytosolic iron-sulfur assembly component 2A, found in Homo sapiens (Human).